We begin with the raw amino-acid sequence, 129 residues long: Small ribosomal subunit protein uS12 (129 aa).

3-methylthioaspartic acid is present on D89. The interval 101-129 (SLDTSGVADRKQSRSKYGAKQPKAGAAKK) is disordered. The segment covering 116–129 (KYGAKQPKAGAAKK) has biased composition (low complexity).

This sequence belongs to the universal ribosomal protein uS12 family. Part of the 30S ribosomal subunit. Contacts proteins S8 and S17. May interact with IF1 in the 30S initiation complex.

Its function is as follows. With S4 and S5 plays an important role in translational accuracy. Functionally, interacts with and stabilizes bases of the 16S rRNA that are involved in tRNA selection in the A site and with the mRNA backbone. Located at the interface of the 30S and 50S subunits, it traverses the body of the 30S subunit contacting proteins on the other side and probably holding the rRNA structure together. The combined cluster of proteins S8, S12 and S17 appears to hold together the shoulder and platform of the 30S subunit. The polypeptide is Small ribosomal subunit protein uS12 (Chlorobaculum parvum (strain DSM 263 / NCIMB 8327) (Chlorobium vibrioforme subsp. thiosulfatophilum)).